A 506-amino-acid chain; its full sequence is D-alanine--D-alanyl carrier protein ligase (506 aa).

Residue 152–153 (TS) participates in ATP binding. D-alanine is bound at residue aspartate 197. 292-297 (NTYGPT) is an ATP binding site. A D-alanine-binding site is contributed by valine 301. ATP is bound by residues aspartate 383, 395 to 398 (YRGR), and lysine 494. Lysine 494 is a D-alanine binding site.

This sequence belongs to the ATP-dependent AMP-binding enzyme family. DltA subfamily.

It localises to the cytoplasm. It carries out the reaction holo-[D-alanyl-carrier protein] + D-alanine + ATP = D-alanyl-[D-alanyl-carrier protein] + AMP + diphosphate. Its pathway is cell wall biogenesis; lipoteichoic acid biosynthesis. Functionally, catalyzes the first step in the D-alanylation of lipoteichoic acid (LTA), the activation of D-alanine and its transfer onto the D-alanyl carrier protein (Dcp) DltC. In an ATP-dependent two-step reaction, forms a high energy D-alanyl-AMP intermediate, followed by transfer of the D-alanyl residue as a thiol ester to the phosphopantheinyl prosthetic group of the Dcp. D-alanylation of LTA plays an important role in modulating the properties of the cell wall in Gram-positive bacteria, influencing the net charge of the cell wall. The protein is D-alanine--D-alanyl carrier protein ligase of Lacticaseibacillus casei (strain BL23) (Lactobacillus casei).